The following is a 120-amino-acid chain: U13-lycotoxin-Ls1e (120 aa).

The signal sequence occupies residues 1 to 16; sequence MKILFVLISILYAVYC. A propeptide spanning residues 17 to 54 is cleaved from the precursor; it reads FSSEEDVDSAYLANELEPVEDINSEQYAALEPKEEQER. 4 disulfide bridges follow: Cys56–Cys70, Cys63–Cys76, Cys69–Cys87, and Cys78–Cys85. Positions 56 to 95 constitute an Agouti domain; that stretch reads CAGMGRDCKDDCDCCLNIATCNCWFGRYFCSCTFGDYQTC.

The protein belongs to the neurotoxin 05 (agouti) family. Post-translationally, contains 6 disulfide bonds. As to expression, expressed by the venom gland.

Its subcellular location is the secreted. This is U13-lycotoxin-Ls1e from Lycosa singoriensis (Wolf spider).